We begin with the raw amino-acid sequence, 197 residues long: Protein RESISTANCE TO PHYTOPHTHORA 1, chloroplastic (197 aa).

Residues 1–52 (MSWSLCSTHGVSSSIALTYGFRHRRRSTFRIFATSDGLEPKDDPPESPLPSS) constitute a chloroplast transit peptide. The tract at residues 35 to 56 (SDGLEPKDDPPESPLPSSSSAL) is disordered. Transmembrane regions (helical) follow at residues 93-113 (FEVQ…NLLF), 120-140 (LWRL…LRAR), 150-170 (LNYL…FWKS), and 173-193 (LVWS…LGWL).

It localises to the plastid. Its subcellular location is the chloroplast. It is found in the membrane. In terms of biological role, plays a positive role in the immune response to the oomycetes P.brassicae, including induced oxidative burst (e.g. H(2)O(2)) and enhanced expression of defense-related genes. The chain is Protein RESISTANCE TO PHYTOPHTHORA 1, chloroplastic from Arabidopsis thaliana (Mouse-ear cress).